The following is a 738-amino-acid chain: Polyribonucleotide nucleotidyltransferase (738 aa).

Positions 528 and 534 each coordinate Mg(2+). The KH domain maps to 594 to 653 (PRVVRVKIPVQKIGELIGPKGKVINSIQDETGAEISIEDDGTVYIGSSQADSSEKAVAMV). The S1 motif domain maps to 665-737 (GSQFLGTVVK…DRGKLCLVAV (73 aa)).

It belongs to the polyribonucleotide nucleotidyltransferase family. The cofactor is Mg(2+).

It is found in the cytoplasm. It carries out the reaction RNA(n+1) + phosphate = RNA(n) + a ribonucleoside 5'-diphosphate. Involved in mRNA degradation. Catalyzes the phosphorolysis of single-stranded polyribonucleotides processively in the 3'- to 5'-direction. The sequence is that of Polyribonucleotide nucleotidyltransferase from Tropheryma whipplei (strain Twist) (Whipple's bacillus).